The primary structure comprises 324 residues: Phospho-N-acetylmuramoyl-pentapeptide-transferase (324 aa).

The next 10 membrane-spanning stretches (helical) occupy residues 5 to 25 (GLLV…PLFI), 52 to 72 (PTMG…IMAI), 77 to 97 (LGAE…IGFL), 122 to 142 (VIAI…YIMI), 149 to 169 (FELG…GSNA), 176 to 196 (LDGL…IIAV), 201 to 221 (FGVA…LVFN), 227 to 247 (VFMG…VAIL), 253 to 273 (LLVI…IQVI), and 302 to 322 (VVVT…YIGV).

Belongs to the glycosyltransferase 4 family. MraY subfamily. The cofactor is Mg(2+).

It is found in the cell membrane. The enzyme catalyses UDP-N-acetyl-alpha-D-muramoyl-L-alanyl-gamma-D-glutamyl-meso-2,6-diaminopimeloyl-D-alanyl-D-alanine + di-trans,octa-cis-undecaprenyl phosphate = di-trans,octa-cis-undecaprenyl diphospho-N-acetyl-alpha-D-muramoyl-L-alanyl-D-glutamyl-meso-2,6-diaminopimeloyl-D-alanyl-D-alanine + UMP. It functions in the pathway cell wall biogenesis; peptidoglycan biosynthesis. Functionally, catalyzes the initial step of the lipid cycle reactions in the biosynthesis of the cell wall peptidoglycan: transfers peptidoglycan precursor phospho-MurNAc-pentapeptide from UDP-MurNAc-pentapeptide onto the lipid carrier undecaprenyl phosphate, yielding undecaprenyl-pyrophosphoryl-MurNAc-pentapeptide, known as lipid I. This Bacillus cereus (strain AH820) protein is Phospho-N-acetylmuramoyl-pentapeptide-transferase.